Reading from the N-terminus, the 224-residue chain is Claudin-19 (224 aa).

The Cytoplasmic segment spans residues 1 to 7; it reads MANSGLQ. The chain crosses the membrane as a helical span at residues 8–28; it reads LLGYFLALGGWVGIIASTALP. The Extracellular segment spans residues 29-81; sequence QWKQSSYAGDAIITAVGLYEGLWMSCASQSTGQVQCKLYDSLLALDGHIQSAR. Cysteines 54 and 64 form a disulfide. Residues 82-102 traverse the membrane as a helical segment; that stretch reads ALMVVAVLLGFVAMVLSVVGM. Residues 103–117 lie on the Cytoplasmic side of the membrane; that stretch reads KCTRVGDSNPTAKGR. Residues 118 to 138 form a helical membrane-spanning segment; that stretch reads VAISGGALFLLAGLCTLTAVS. Residues 139 to 160 lie on the Extracellular side of the membrane; sequence WYATLVTQEFFNPSTPVNARYE. The helical transmembrane segment at 161–181 threads the bilayer; that stretch reads FGPALFVGWASAGLAILGGSF. Residues 182-224 lie on the Cytoplasmic side of the membrane; it reads LCCTCPEPERANSIPQPYRSGPSTAAREPVVKLSTSVKGPLGV.

The protein belongs to the claudin family. Can form homo- and heteropolymeric tight junction strands. Interacts with other claudins including CLDN3, CLDN10, CLDN16 and CLDN18 with highest affinity for CLDN16. Interacts (via PDZ-binding motif TRV) with TJP1 (via PDZ domain).

It localises to the cell junction. The protein resides in the tight junction. It is found in the cell membrane. The enzyme catalyses Mg(2+)(in) = Mg(2+)(out). It carries out the reaction Ca(2+)(in) = Ca(2+)(out). It catalyses the reaction Na(+)(in) = Na(+)(out). The catalysed reaction is K(+)(in) = K(+)(out). The enzyme catalyses Rb(+)(in) = Rb(+)(out). It carries out the reaction Cs(+)(in) = Cs(+)(out). It catalyses the reaction Li(+)(in) = Li(+)(out). Functionally, forms paracellular channels: coassembles with CLDN16 into tight junction strands with cation-selective channels through the strands, conveying epithelial permeability in a process known as paracellular tight junction permeability. Involved in the maintenance of ion gradients along the nephron. In the thick ascending limb (TAL) of Henle's loop, facilitates sodium paracellular permeability from the interstitial compartment to the lumen, contributing to the lumen-positive transepithelial potential that drives paracellular magnesium and calcium reabsorption. Forms paracellular barriers on its own. In the peripheral nervous system, represents a major constituent of the tight junctions in Schwann cells and contributes to electrical sealing. During retinal neurogenesis, may regulate the barrier properties of tight junctions in retinal pigment epithelium, required for proper retinal tissue differentiation and vision. In Rattus norvegicus (Rat), this protein is Claudin-19.